Here is a 513-residue protein sequence, read N- to C-terminus: uncharacterized protein (513 aa).

The region spanning 254-447 is the HDOD domain; sequence IPQLPSKLLE…INTIRFHHNL (194 aa).

This is an uncharacterized protein from Treponema pallidum (strain Nichols).